A 185-amino-acid chain; its full sequence is Ribosome-recycling factor (185 aa).

Belongs to the RRF family.

The protein localises to the cytoplasm. Functionally, responsible for the release of ribosomes from messenger RNA at the termination of protein biosynthesis. May increase the efficiency of translation by recycling ribosomes from one round of translation to another. This is Ribosome-recycling factor from Thermotoga petrophila (strain ATCC BAA-488 / DSM 13995 / JCM 10881 / RKU-1).